The sequence spans 196 residues: Putative NADH dehydrogenase/NAD(P)H nitroreductase PST_3601 (196 aa).

Belongs to the nitroreductase family. HadB/RutE subfamily. FMN is required as a cofactor.

The sequence is that of Putative NADH dehydrogenase/NAD(P)H nitroreductase PST_3601 from Stutzerimonas stutzeri (strain A1501) (Pseudomonas stutzeri).